Consider the following 400-residue polypeptide: CCA-adding enzyme (400 aa).

Gly-28 and Arg-31 together coordinate ATP. Residues Gly-28 and Arg-31 each contribute to the CTP site. The Mg(2+) site is built by Asp-41 and Asp-43. ATP is bound by residues Arg-112, Asp-155, Arg-158, Arg-161, and Arg-164. CTP contacts are provided by Arg-112, Asp-155, Arg-158, Arg-161, and Arg-164.

It belongs to the tRNA nucleotidyltransferase/poly(A) polymerase family. Bacterial CCA-adding enzyme type 3 subfamily. Homodimer. Mg(2+) is required as a cofactor.

It carries out the reaction a tRNA precursor + 2 CTP + ATP = a tRNA with a 3' CCA end + 3 diphosphate. It catalyses the reaction a tRNA with a 3' CCA end + 2 CTP + ATP = a tRNA with a 3' CCACCA end + 3 diphosphate. In terms of biological role, catalyzes the addition and repair of the essential 3'-terminal CCA sequence in tRNAs without using a nucleic acid template. Adds these three nucleotides in the order of C, C, and A to the tRNA nucleotide-73, using CTP and ATP as substrates and producing inorganic pyrophosphate. tRNA 3'-terminal CCA addition is required both for tRNA processing and repair. Also involved in tRNA surveillance by mediating tandem CCA addition to generate a CCACCA at the 3' terminus of unstable tRNAs. While stable tRNAs receive only 3'-terminal CCA, unstable tRNAs are marked with CCACCA and rapidly degraded. In Staphylococcus aureus (strain Mu3 / ATCC 700698), this protein is CCA-adding enzyme.